The following is a 493-amino-acid chain: Probable cytosol aminopeptidase (493 aa).

Mn(2+) is bound by residues lysine 265 and aspartate 270. Lysine 277 is a catalytic residue. Mn(2+) contacts are provided by aspartate 288, aspartate 347, and glutamate 349. Arginine 351 is an active-site residue.

It belongs to the peptidase M17 family. Requires Mn(2+) as cofactor.

The protein resides in the cytoplasm. The enzyme catalyses Release of an N-terminal amino acid, Xaa-|-Yaa-, in which Xaa is preferably Leu, but may be other amino acids including Pro although not Arg or Lys, and Yaa may be Pro. Amino acid amides and methyl esters are also readily hydrolyzed, but rates on arylamides are exceedingly low.. It catalyses the reaction Release of an N-terminal amino acid, preferentially leucine, but not glutamic or aspartic acids.. Its function is as follows. Presumably involved in the processing and regular turnover of intracellular proteins. Catalyzes the removal of unsubstituted N-terminal amino acids from various peptides. This chain is Probable cytosol aminopeptidase, found in Hydrogenovibrio crunogenus (strain DSM 25203 / XCL-2) (Thiomicrospira crunogena).